Here is a 274-residue protein sequence, read N- to C-terminus: Diaminopimelate epimerase (274 aa).

The substrate site is built by N11, Q44, and N64. The active-site Proton donor is C73. Substrate-binding positions include 74–75, N157, N190, and 208–209; these read GN and ER. Residue C217 is the Proton acceptor of the active site. Substrate is bound at residue 218 to 219; that stretch reads GS.

This sequence belongs to the diaminopimelate epimerase family. In terms of assembly, homodimer.

It is found in the cytoplasm. The catalysed reaction is (2S,6S)-2,6-diaminopimelate = meso-2,6-diaminopimelate. The protein operates within amino-acid biosynthesis; L-lysine biosynthesis via DAP pathway; DL-2,6-diaminopimelate from LL-2,6-diaminopimelate: step 1/1. Its function is as follows. Catalyzes the stereoinversion of LL-2,6-diaminopimelate (L,L-DAP) to meso-diaminopimelate (meso-DAP), a precursor of L-lysine and an essential component of the bacterial peptidoglycan. The sequence is that of Diaminopimelate epimerase from Yersinia pseudotuberculosis serotype O:1b (strain IP 31758).